Reading from the N-terminus, the 226-residue chain is Ribonuclease 3 (226 aa).

One can recognise an RNase III domain in the interval 6–128 (IQKLQKILGY…LIGSIFLDSN (123 aa)). E41 contacts Mg(2+). D45 is an active-site residue. Mg(2+) is bound by residues N114 and E117. E117 is an active-site residue. A DRBM domain is found at 155–225 (DPKTRLQEYL…AQNALIKLGI (71 aa)).

It belongs to the ribonuclease III family. As to quaternary structure, homodimer. It depends on Mg(2+) as a cofactor.

It is found in the cytoplasm. The enzyme catalyses Endonucleolytic cleavage to 5'-phosphomonoester.. In terms of biological role, digests double-stranded RNA. Involved in the processing of primary rRNA transcript to yield the immediate precursors to the large and small rRNAs (23S and 16S). Processes some mRNAs, and tRNAs when they are encoded in the rRNA operon. Processes pre-crRNA and tracrRNA of type II CRISPR loci if present in the organism. The chain is Ribonuclease 3 from Buchnera aphidicola subsp. Baizongia pistaciae (strain Bp).